The primary structure comprises 138 residues: Large ribosomal subunit protein bL17 (138 aa).

It belongs to the bacterial ribosomal protein bL17 family. In terms of assembly, part of the 50S ribosomal subunit. Contacts protein L32.

This is Large ribosomal subunit protein bL17 from Dinoroseobacter shibae (strain DSM 16493 / NCIMB 14021 / DFL 12).